A 448-amino-acid polypeptide reads, in one-letter code: Phosphoglucosamine mutase (448 aa).

The active-site Phosphoserine intermediate is the S104. Residues S104, D245, D247, and D249 each coordinate Mg(2+). S104 carries the phosphoserine modification.

This sequence belongs to the phosphohexose mutase family. It depends on Mg(2+) as a cofactor. Post-translationally, activated by phosphorylation.

It catalyses the reaction alpha-D-glucosamine 1-phosphate = D-glucosamine 6-phosphate. Catalyzes the conversion of glucosamine-6-phosphate to glucosamine-1-phosphate. The polypeptide is Phosphoglucosamine mutase (Caulobacter vibrioides (strain ATCC 19089 / CIP 103742 / CB 15) (Caulobacter crescentus)).